Reading from the N-terminus, the 217-residue chain is Large ribosomal subunit protein bL25 (217 aa).

Residues 187-217 are disordered; it reads STPSGLEVEEETGEEESAEPEVIEKGKKEEE. A compositionally biased stretch (acidic residues) spans 193–207; that stretch reads EVEEETGEEESAEPE. A compositionally biased stretch (basic and acidic residues) spans 208–217; the sequence is VIEKGKKEEE.

This sequence belongs to the bacterial ribosomal protein bL25 family. CTC subfamily. As to quaternary structure, part of the 50S ribosomal subunit; part of the 5S rRNA/L5/L18/L25 subcomplex. Contacts the 5S rRNA. Binds to the 5S rRNA independently of L5 and L18.

Functionally, this is one of the proteins that binds to the 5S RNA in the ribosome where it forms part of the central protuberance. The sequence is that of Large ribosomal subunit protein bL25 from Thermosipho africanus (strain TCF52B).